Reading from the N-terminus, the 185-residue chain is Ribosome-recycling factor (185 aa).

The protein belongs to the RRF family.

It localises to the cytoplasm. Functionally, responsible for the release of ribosomes from messenger RNA at the termination of protein biosynthesis. May increase the efficiency of translation by recycling ribosomes from one round of translation to another. The polypeptide is Ribosome-recycling factor (Streptococcus gordonii (strain Challis / ATCC 35105 / BCRC 15272 / CH1 / DL1 / V288)).